A 677-amino-acid polypeptide reads, in one-letter code: MTDLSHSREKDKINPVVFYTSAGLILLFSLTTILFRDFSALWIGRTLDWVSKTFGWYYLLAATLYIVFVVCIACSRFGSVKLGPEQSKPEFSLLSWAAMLFAAGIGIDLMFFSVAEPVTQYMQPPEGAGQTIEAARQAMVWTLFHYGLTGWSMYALMGMALGYFSYRYNLPLTIRSALYPIFGKRINGPIGHSVDIAAVIGTIFGIATTLGIGVVQLNYGLSVLFDIPDSMAAKAALIALSVIIATISVTSGVDKGIRVLSELNVALALGLILFVLFMGDTSFLLNALVLNVGDYVNRFMGMTLNSFAFDRPVEWMNNWTLFFWAWWVAWSPFVGLFLARISRGRTIRQFVLGTLIIPFTFTLLWLSVFGNSALYEIIHGGAAFAEEAMVHPERGFYSLLAQYPAFTFSASVATITGLLFYVTSADSGALVLGNFTSQLKDINSDAPGWLRVFWSVAIGLLTLGMLMTNGISALQNTTVIMGLPFSFVIFFVMAGLYKSLKVEDYRRESANRDTAPRPLGLQDRLSWKKRLSRLMNYPGTRYTKQMMETVCYPAMEEVAQELRLRGAYVELKSLPPEEGQQLGHLDLLVHMGEEQNFVYQIWPQQYSVPGFTYRARSGKSTYYRLETFLLEGSQGNDLMDYSKEQVITDILDQYERHLNFIHLHREAPGHSVMFPDA.

12 helical membrane-spanning segments follow: residues 15 to 35 (PVVF…TILF), 54 to 74 (FGWY…CIAC), 94 to 114 (LSWA…FFSV), 144 to 164 (FHYG…LGYF), 196 to 216 (IAAV…GVVQ), 233 to 253 (AKAA…TSGV), 265 to 285 (VALA…SFLL), 319 to 339 (WTLF…LFLA), 350 to 370 (FVLG…SVFG), 412 to 432 (VATI…ALVL), 452 to 472 (VFWS…NGIS), and 477 to 497 (TTVI…AGLY).

The protein belongs to the BCCT transporter (TC 2.A.15) family.

The protein localises to the cell inner membrane. The catalysed reaction is choline(in) + H(+)(in) = choline(out) + H(+)(out). The protein operates within amine and polyamine biosynthesis; betaine biosynthesis via choline pathway. Functionally, high-affinity uptake of choline driven by a proton-motive force. The polypeptide is High-affinity choline transport protein (betT) (Escherichia coli O157:H7).